Here is a 488-residue protein sequence, read N- to C-terminus: Proline--tRNA ligase (488 aa).

The protein belongs to the class-II aminoacyl-tRNA synthetase family. ProS type 3 subfamily. As to quaternary structure, homodimer.

It localises to the cytoplasm. The catalysed reaction is tRNA(Pro) + L-proline + ATP = L-prolyl-tRNA(Pro) + AMP + diphosphate. In terms of biological role, catalyzes the attachment of proline to tRNA(Pro) in a two-step reaction: proline is first activated by ATP to form Pro-AMP and then transferred to the acceptor end of tRNA(Pro). Can inadvertently accommodate and process cysteine. This Borreliella burgdorferi (strain ATCC 35210 / DSM 4680 / CIP 102532 / B31) (Borrelia burgdorferi) protein is Proline--tRNA ligase (proS).